Here is a 68-residue protein sequence, read N- to C-terminus: UPF0434 protein BTH_I0741 (68 aa).

It belongs to the UPF0434 family.

The sequence is that of UPF0434 protein BTH_I0741 from Burkholderia thailandensis (strain ATCC 700388 / DSM 13276 / CCUG 48851 / CIP 106301 / E264).